Reading from the N-terminus, the 71-residue chain is Cytotoxic linear peptide IsCT2 (71 aa).

Residues 1-23 form the signal peptide; it reads MKTQFAILLVALVLFQMFAQSEA. F36 is modified (phenylalanine amide). Positions 40–71 are excised as a propeptide; it reads ALNNDLDLDGLDELFDGEISQADVDFLKELMR.

Belongs to the non-disulfide-bridged peptide (NDBP) superfamily. Short antimicrobial peptide (group 4) family. Post-translationally, isCT2F is an enzymatic proteolytic cleavage product of IsCT2 by the proteases present in the venom. As to expression, expressed by the venom gland.

Its subcellular location is the secreted. It localises to the target cell membrane. Its function is as follows. IsCT2 shows weak hemolytic activity and antibacterial activity against both Gram-positive and Gram-negative bacteria probably by forming pores in the cell membrane. IsCT2 adopts an amphipathic alpha-helical structure. IsCT2f shows neither hemolytic, nor antibacterial activities, surely due to the fact that it cannot apply amphipathic alpha-helical structure. The protein is Cytotoxic linear peptide IsCT2 of Opisthacanthus madagascariensis (Scorpion).